A 539-amino-acid polypeptide reads, in one-letter code: Glucose-6-phosphate isomerase (539 aa).

Glutamate 349 (proton donor) is an active-site residue. Catalysis depends on residues histidine 380 and lysine 508.

Belongs to the GPI family.

The protein localises to the cytoplasm. The catalysed reaction is alpha-D-glucose 6-phosphate = beta-D-fructose 6-phosphate. The protein operates within carbohydrate biosynthesis; gluconeogenesis. Its pathway is carbohydrate degradation; glycolysis; D-glyceraldehyde 3-phosphate and glycerone phosphate from D-glucose: step 2/4. Catalyzes the reversible isomerization of glucose-6-phosphate to fructose-6-phosphate. This chain is Glucose-6-phosphate isomerase, found in Caulobacter sp. (strain K31).